The primary structure comprises 539 residues: Chaperonin GroEL (539 aa).

Residues 29 to 32, 86 to 90, glycine 413, 476 to 478, and aspartate 492 contribute to the ATP site; these read TIGP, DGTTT, and NAA.

This sequence belongs to the chaperonin (HSP60) family. Forms a cylinder of 14 subunits composed of two heptameric rings stacked back-to-back. Interacts with the co-chaperonin GroES.

The protein resides in the cytoplasm. It catalyses the reaction ATP + H2O + a folded polypeptide = ADP + phosphate + an unfolded polypeptide.. Functionally, together with its co-chaperonin GroES, plays an essential role in assisting protein folding. The GroEL-GroES system forms a nano-cage that allows encapsulation of the non-native substrate proteins and provides a physical environment optimized to promote and accelerate protein folding. The polypeptide is Chaperonin GroEL (Staphylococcus epidermidis).